A 600-amino-acid chain; its full sequence is Phosphoenolpyruvate carboxykinase (ATP) (600 aa).

ATP is bound at residue 302-309 (GLSGTGKT).

The protein belongs to the phosphoenolpyruvate carboxykinase (ATP) family.

The catalysed reaction is oxaloacetate + ATP = phosphoenolpyruvate + ADP + CO2. It participates in carbohydrate biosynthesis; gluconeogenesis. The chain is Phosphoenolpyruvate carboxykinase (ATP) (acuF) from Emericella nidulans (strain FGSC A4 / ATCC 38163 / CBS 112.46 / NRRL 194 / M139) (Aspergillus nidulans).